Here is a 149-residue protein sequence, read N- to C-terminus: Transcriptional repressor NrdR (149 aa).

A zinc finger lies at 3–34 (CPFCSATDTKVIDSRLVAEGHQVRRRRECTEC). The ATP-cone domain maps to 49 to 139 (PRVIKRDGSR…VYRAFEDVSE (91 aa)).

Belongs to the NrdR family. Zn(2+) serves as cofactor.

Negatively regulates transcription of bacterial ribonucleotide reductase nrd genes and operons by binding to NrdR-boxes. The polypeptide is Transcriptional repressor NrdR (Shewanella putrefaciens (strain CN-32 / ATCC BAA-453)).